The chain runs to 219 residues: Capsid protein (219 aa).

The tract at residues 5 to 29 is nuclear localization signals; sequence RRRRVVRRRKPVRRLRRRRRRFFKR.

The protein belongs to the circoviridae capsid protein family. Homomultimer. Assembles in the nucleus, presumably in an immature form, then migrates to the cytoplasm once assembled as mature virion. Interacts with Rep; this interaction relocates Rep into the nucleus.

It localises to the host nucleus. The protein resides in the virion. Its function is as follows. Self-assembles to form the virion icosahedral capsid with a T=1 symmetry. This very small capsid (17-22 nm in diameter) allows the virus to be very stable in the environment and resistant to some disinfectants, including detergents. Essential for the initial attachment to heparan sulfate moieties and chondroitin sulfate B of the host cell surface proteoglycans. After attachment, the virus is endocytosed and traffics to the nucleus. The capsid protein binds and transports the viral genome and Rep across the nuclear envelope. In Homo sapiens (Human), this protein is Capsid protein (Cap).